Here is a 256-residue protein sequence, read N- to C-terminus: Imidazole glycerol phosphate synthase subunit HisF (256 aa).

Catalysis depends on residues aspartate 12 and aspartate 131.

It belongs to the HisA/HisF family. As to quaternary structure, heterodimer of HisH and HisF.

It localises to the cytoplasm. The enzyme catalyses 5-[(5-phospho-1-deoxy-D-ribulos-1-ylimino)methylamino]-1-(5-phospho-beta-D-ribosyl)imidazole-4-carboxamide + L-glutamine = D-erythro-1-(imidazol-4-yl)glycerol 3-phosphate + 5-amino-1-(5-phospho-beta-D-ribosyl)imidazole-4-carboxamide + L-glutamate + H(+). The protein operates within amino-acid biosynthesis; L-histidine biosynthesis; L-histidine from 5-phospho-alpha-D-ribose 1-diphosphate: step 5/9. Functionally, IGPS catalyzes the conversion of PRFAR and glutamine to IGP, AICAR and glutamate. The HisF subunit catalyzes the cyclization activity that produces IGP and AICAR from PRFAR using the ammonia provided by the HisH subunit. The sequence is that of Imidazole glycerol phosphate synthase subunit HisF from Ectopseudomonas mendocina (strain ymp) (Pseudomonas mendocina).